Consider the following 398-residue polypeptide: Phosphomevalonate dehydratase large subunit (398 aa).

(R)-5-phosphomevalonate-binding residues include Gly-48, Val-49, Ser-50, Asn-76, and Pro-77. Position 116 (Cys-116) interacts with [4Fe-4S] cluster. (R)-5-phosphomevalonate-binding residues include Glu-136 and Ser-137. Positions 287 and 342 each coordinate [4Fe-4S] cluster. Lys-361 contributes to the (R)-5-phosphomevalonate binding site.

It belongs to the AcnX type II large subunit family. Heterodimer composed of a large subunit (PMDh-L) and a small subunit (PMDh-S). Requires [4Fe-4S] cluster as cofactor.

The catalysed reaction is (R)-5-phosphomevalonate = (2E)-3-methyl-5-phosphooxypent-2-enoate + H2O. It participates in isoprenoid biosynthesis; isopentenyl diphosphate biosynthesis via mevalonate pathway. Its function is as follows. Component of a hydro-lyase that catalyzes the dehydration of mevalonate 5-phosphate (MVA5P) to form trans-anhydromevalonate 5-phosphate (tAHMP). Involved in the archaeal mevalonate (MVA) pathway, which provides fundamental precursors for isoprenoid biosynthesis, such as isopentenyl diphosphate (IPP) and dimethylallyl diphosphate (DMAPP). The sequence is that of Phosphomevalonate dehydratase large subunit from Methanosarcina mazei (strain ATCC BAA-159 / DSM 3647 / Goe1 / Go1 / JCM 11833 / OCM 88) (Methanosarcina frisia).